We begin with the raw amino-acid sequence, 360 residues long: Phospho-N-acetylmuramoyl-pentapeptide-transferase (360 aa).

10 consecutive transmembrane segments (helical) span residues 26-46, 70-90, 94-114, 136-156, 164-184, 199-219, 236-256, 263-283, 289-309, and 339-359; these read GVLATLTALVLSLFIGPFFIA, GTPTMGGALILLVVILTTLLW, GNPLVWVAVLTTLAFGAIGFV, LQSLVAFAAGGVLYALASNPV, FIPHVLIPMGAGFIVFSYFVI, GLAIVPTVMVAGALGVFAYVS, SGQMLIFCGALVGAGLGFLWF, VFMGDTGALALGAALAIVAIV, VLFIMGGVFVVETLSVIIQVV, and AVRFWIITVILVLVGLSSLKI.

It belongs to the glycosyltransferase 4 family. MraY subfamily. It depends on Mg(2+) as a cofactor.

It localises to the cell inner membrane. The catalysed reaction is UDP-N-acetyl-alpha-D-muramoyl-L-alanyl-gamma-D-glutamyl-meso-2,6-diaminopimeloyl-D-alanyl-D-alanine + di-trans,octa-cis-undecaprenyl phosphate = di-trans,octa-cis-undecaprenyl diphospho-N-acetyl-alpha-D-muramoyl-L-alanyl-D-glutamyl-meso-2,6-diaminopimeloyl-D-alanyl-D-alanine + UMP. Its pathway is cell wall biogenesis; peptidoglycan biosynthesis. Functionally, catalyzes the initial step of the lipid cycle reactions in the biosynthesis of the cell wall peptidoglycan: transfers peptidoglycan precursor phospho-MurNAc-pentapeptide from UDP-MurNAc-pentapeptide onto the lipid carrier undecaprenyl phosphate, yielding undecaprenyl-pyrophosphoryl-MurNAc-pentapeptide, known as lipid I. This chain is Phospho-N-acetylmuramoyl-pentapeptide-transferase, found in Acidithiobacillus ferrooxidans (strain ATCC 23270 / DSM 14882 / CIP 104768 / NCIMB 8455) (Ferrobacillus ferrooxidans (strain ATCC 23270)).